The chain runs to 141 residues: Ribonuclease VapC38 (141 aa).

The Mg(2+) site is built by D5 and D102.

This sequence belongs to the PINc/VapC protein family. Mg(2+) serves as cofactor.

The protein localises to the secreted. Toxic component of a type II toxin-antitoxin (TA) system. An RNase. Its cognate antitoxin is VapB38. In Mycobacterium tuberculosis (strain ATCC 25618 / H37Rv), this protein is Ribonuclease VapC38.